The following is a 258-amino-acid chain: Sugar fermentation stimulation protein homolog (258 aa).

The protein belongs to the SfsA family.

The sequence is that of Sugar fermentation stimulation protein homolog from Prochlorococcus marinus (strain NATL2A).